Here is a 436-residue protein sequence, read N- to C-terminus: Methylenetetrahydrofolate--tRNA-(uracil-5-)-methyltransferase TrmFO (436 aa).

11-16 (GAGLAG) contacts FAD.

Belongs to the MnmG family. TrmFO subfamily. FAD serves as cofactor.

The protein localises to the cytoplasm. It catalyses the reaction uridine(54) in tRNA + (6R)-5,10-methylene-5,6,7,8-tetrahydrofolate + NADH + H(+) = 5-methyluridine(54) in tRNA + (6S)-5,6,7,8-tetrahydrofolate + NAD(+). The enzyme catalyses uridine(54) in tRNA + (6R)-5,10-methylene-5,6,7,8-tetrahydrofolate + NADPH + H(+) = 5-methyluridine(54) in tRNA + (6S)-5,6,7,8-tetrahydrofolate + NADP(+). Catalyzes the folate-dependent formation of 5-methyl-uridine at position 54 (M-5-U54) in all tRNAs. The polypeptide is Methylenetetrahydrofolate--tRNA-(uracil-5-)-methyltransferase TrmFO (Shouchella clausii (strain KSM-K16) (Alkalihalobacillus clausii)).